Here is a 328-residue protein sequence, read N- to C-terminus: Glucokinase (328 aa).

ATP is bound at residue 16 to 21 (ADIGGT).

The protein belongs to the bacterial glucokinase family.

It is found in the cytoplasm. It catalyses the reaction D-glucose + ATP = D-glucose 6-phosphate + ADP + H(+). In Neisseria gonorrhoeae (strain ATCC 700825 / FA 1090), this protein is Glucokinase.